Reading from the N-terminus, the 162-residue chain is uncharacterized protein (162 aa).

The N-terminal stretch at Met1 to Ala23 is a signal peptide.

This is an uncharacterized protein from Mycosarcoma maydis (Corn smut fungus).